The sequence spans 257 residues: NAD-capped RNA hydrolase NudC (257 aa).

Residues lysine 25 and arginine 69 each contribute to the substrate site. Positions 98 and 101 each coordinate Zn(2+). Glutamate 111 contributes to the substrate binding site. Zn(2+)-binding residues include cysteine 116 and cysteine 119. Tyrosine 124 contributes to the substrate binding site. Residues proline 125–threonine 248 enclose the Nudix hydrolase domain. Positions 158, 174, and 178 each coordinate a divalent metal cation. The Nudix box motif lies at glycine 159 to glycine 180. Glutamine 192 to serine 199 is a substrate binding site. An a divalent metal cation-binding site is contributed by glutamate 219. Alanine 241 serves as a coordination point for substrate.

The protein belongs to the Nudix hydrolase family. NudC subfamily. Homodimer. Mg(2+) serves as cofactor. It depends on Mn(2+) as a cofactor. The cofactor is Zn(2+).

It carries out the reaction a 5'-end NAD(+)-phospho-ribonucleoside in mRNA + H2O = a 5'-end phospho-adenosine-phospho-ribonucleoside in mRNA + beta-nicotinamide D-ribonucleotide + 2 H(+). The enzyme catalyses NAD(+) + H2O = beta-nicotinamide D-ribonucleotide + AMP + 2 H(+). The catalysed reaction is NADH + H2O = reduced beta-nicotinamide D-ribonucleotide + AMP + 2 H(+). Functionally, mRNA decapping enzyme that specifically removes the nicotinamide adenine dinucleotide (NAD) cap from a subset of mRNAs by hydrolyzing the diphosphate linkage to produce nicotinamide mononucleotide (NMN) and 5' monophosphate mRNA. The NAD-cap is present at the 5'-end of some mRNAs and stabilizes RNA against 5'-processing. Has preference for mRNAs with a 5'-end purine. Catalyzes the hydrolysis of a broad range of dinucleotide pyrophosphates. In Shigella flexneri serotype 5b (strain 8401), this protein is NAD-capped RNA hydrolase NudC.